The following is a 477-amino-acid chain: Xylose isomerase (477 aa).

H142 is an active-site residue. E273, E309, H312, D337, D348, D350, and D380 together coordinate Mn(2+).

The protein belongs to the xylose isomerase family. Requires Mn(2+) as cofactor.

It catalyses the reaction alpha-D-xylose = alpha-D-xylulofuranose. This chain is Xylose isomerase (XYLA), found in Arabidopsis thaliana (Mouse-ear cress).